The following is a 380-amino-acid chain: Cytochrome b (380 aa).

A run of 4 helical transmembrane segments spans residues 33–53 (FGSL…FLAM), 77–98 (WLIR…YMHI), 113–133 (WNIG…GYVL), and 178–198 (FFAF…IHLL). Residues His83 and His97 each coordinate heme b. Heme b is bound by residues His182 and His196. His201 is an a ubiquinone binding site. 4 helical membrane passes run 226-246 (YKDL…ALFS), 288-308 (LGGV…PLLH), 320-340 (ITQF…WIGG), and 347-367 (FIII…VLFP).

Belongs to the cytochrome b family. The cytochrome bc1 complex contains 3 respiratory subunits (MT-CYB, CYC1 and UQCRFS1), 2 core proteins (UQCRC1 and UQCRC2) and probably 6 low-molecular weight proteins. Heme b serves as cofactor.

The protein resides in the mitochondrion inner membrane. Functionally, component of the ubiquinol-cytochrome c reductase complex (complex III or cytochrome b-c1 complex) that is part of the mitochondrial respiratory chain. The b-c1 complex mediates electron transfer from ubiquinol to cytochrome c. Contributes to the generation of a proton gradient across the mitochondrial membrane that is then used for ATP synthesis. In Carassius auratus (Goldfish), this protein is Cytochrome b (mt-cyb).